Reading from the N-terminus, the 274-residue chain is Cytochrome b-c1 complex subunit Rieske, mitochondrial (274 aa).

Residues 79 to 103 (SHTDVKVPDFSEYRRPEVLDSTKSS) lie on the Mitochondrial matrix side of the membrane. A helical membrane pass occupies residues 104–140 (RESSEARKGFSYLVTAVTTVGVAYAAKNAVTQFVSSM). The Mitochondrial intermembrane portion of the chain corresponds to 141 to 274 (SASADVLALA…FTSDDMVIVG (134 aa)). One can recognise a Rieske domain in the interval 187-272 (EAAVELSQLR…YEFTSDDMVI (86 aa)). 5 residues coordinate [2Fe-2S] cluster: C217, H219, C236, H239, and S241. C222 and C238 are disulfide-bonded.

The protein belongs to the Rieske iron-sulfur protein family. In terms of assembly, component of the ubiquinol-cytochrome c oxidoreductase (cytochrome b-c1 complex, complex III, CIII), a multisubunit enzyme composed of 11 subunits. The complex is composed of 3 respiratory subunits cytochrome b, cytochrome c1 and Rieske protein UQCRFS1, 2 core protein subunits UQCRC1/QCR1 and UQCRC2/QCR2, and 6 low-molecular weight protein subunits UQCRH/QCR6, UQCRB/QCR7, UQCRQ/QCR8, UQCR10/QCR9, UQCR11/QCR10 and subunit 9, the cleavage product of Rieske protein UQCRFS1. The complex exists as an obligatory dimer and forms supercomplexes (SCs) in the inner mitochondrial membrane with NADH-ubiquinone oxidoreductase (complex I, CI) and cytochrome c oxidase (complex IV, CIV), resulting in different assemblies (supercomplex SCI(1)III(2)IV(1) and megacomplex MCI(2)III(2)IV(2)). Incorporation of the Rieske protein UQCRFS1 is the penultimate step in complex III assembly. Interacts with TTC19, which is involved in the clearance of UQCRFS1 fragments. Component of the ubiquinol-cytochrome c oxidoreductase (cytochrome b-c1 complex, complex III, CIII). Subunit 9 corresponds to the mitochondrial targeting sequence (MTS) of Rieske protein UQCRFS1. It is retained after processing and incorporated inside complex III, where it remains bound to the complex and localizes between the 2 core subunits UQCRC1/QCR1 and UQCRC2/QCR2. It depends on [2Fe-2S] cluster as a cofactor. Proteolytic processing is necessary for the correct insertion of UQCRFS1 in the complex III dimer. Several fragments are generated during UQCRFS1 insertion, most probably due to the endogenous matrix-processing peptidase (MPP) activity of the 2 core protein subunits UQCRC1/QCR1 and UQCRC2/QCR2, which are homologous to the 2 mitochondrial-processing peptidase (MPP) subunits beta-MPP and alpha-MPP respectively. The action of the protease is also necessary for the clearance of the UQCRFS1 fragments.

It localises to the mitochondrion inner membrane. The catalysed reaction is a quinol + 2 Fe(III)-[cytochrome c](out) = a quinone + 2 Fe(II)-[cytochrome c](out) + 2 H(+)(out). Component of the ubiquinol-cytochrome c oxidoreductase, a multisubunit transmembrane complex that is part of the mitochondrial electron transport chain which drives oxidative phosphorylation. The respiratory chain contains 3 multisubunit complexes succinate dehydrogenase (complex II, CII), ubiquinol-cytochrome c oxidoreductase (cytochrome b-c1 complex, complex III, CIII) and cytochrome c oxidase (complex IV, CIV), that cooperate to transfer electrons derived from NADH and succinate to molecular oxygen, creating an electrochemical gradient over the inner membrane that drives transmembrane transport and the ATP synthase. The cytochrome b-c1 complex catalyzes electron transfer from ubiquinol to cytochrome c, linking this redox reaction to translocation of protons across the mitochondrial inner membrane, with protons being carried across the membrane as hydrogens on the quinol. In the process called Q cycle, 2 protons are consumed from the matrix, 4 protons are released into the intermembrane space and 2 electrons are passed to cytochrome c. The Rieske protein is a catalytic core subunit containing a [2Fe-2S] iron-sulfur cluster. It cycles between 2 conformational states during catalysis to transfer electrons from the quinol bound in the Q(0) site in cytochrome b to cytochrome c1. Incorporation of UQCRFS1 is the penultimate step in complex III assembly. Its function is as follows. Component of the ubiquinol-cytochrome c oxidoreductase (cytochrome b-c1 complex, complex III, CIII). UQCRFS1 undergoes proteolytic processing once it is incorporated in the complex III dimer. One of the fragments, called subunit 9, corresponds to its mitochondrial targeting sequence (MTS). The proteolytic processing is necessary for the correct insertion of UQCRFS1 in the complex III dimer, but the persistence of UQCRFS1-derived fragments may prevent newly imported UQCRFS1 to be processed and assembled into complex III and is detrimental for the complex III structure and function. This Symphalangus syndactylus (Siamang) protein is Cytochrome b-c1 complex subunit Rieske, mitochondrial (UQCRFS1).